The primary structure comprises 694 residues: ATP-binding cassette sub-family G member 8 (694 aa).

The Cytoplasmic segment spans residues 1 to 437 (MAEKTKEETQ…ISNDFRDLPT (437 aa)). The ABC transporter domain maps to 91–335 (AQFKLPWRSR…FTSIGYPCPR (245 aa)). In terms of domain architecture, ABC transmembrane type-2 spans 436–684 (PTLFIHGAEA…FLSLYYLSLK (249 aa)). Residues 438 to 458 (LFIHGAEACLMSLIIGFLYYG) traverse the membrane as a helical segment. The Extracellular segment spans residues 459 to 468 (HADKPLSFMD). A helical membrane pass occupies residues 469–489 (MAALLFMIGALIPFNVILDVV). The Cytoplasmic portion of the chain corresponds to 490-518 (SKCHSERSLLYYELEDGLYTAGPYFFAKV). The chain crosses the membrane as a helical span at residues 519 to 539 (LGELPEHCAYVIIYGMPIYWL). Residues 540 to 548 (TNLRPGPEL) are Extracellular-facing. The chain crosses the membrane as a helical span at residues 549-569 (FLLHFMLLWLVVFCCRTMALA). Residues 570–576 (ASAMLPT) lie on the Cytoplasmic side of the membrane. A helical membrane pass occupies residues 577 to 597 (FHMSSFCCNALYNSFYLTAGF). Residues 598 to 660 (MINLNNLWIV…VTAMDLNSHP (63 aa)) lie on the Extracellular side of the membrane. Residue asparagine 640 is glycosylated (N-linked (GlcNAc...) asparagine). Residues 661–681 (LYAIYLIVIGISCGFLSLYYL) traverse the membrane as a helical segment. Residues 682–694 (SLKFIKQKSIQDW) lie on the Cytoplasmic side of the membrane.

This sequence belongs to the ABC transporter superfamily. ABCG family. Eye pigment precursor importer (TC 3.A.1.204) subfamily. In terms of assembly, heterodimer with ABCG8. It depends on Mg(2+) as a cofactor. In terms of processing, N-glycosylated. N-glycosylation is important for efficient export out of the endoplasmic reticulum. As to expression, highest expression in liver, with lower levels in small intestine and colon.

It localises to the cell membrane. Its subcellular location is the apical cell membrane. The catalysed reaction is cholesterol(in) + ATP + H2O = cholesterol(out) + ADP + phosphate + H(+). The enzyme catalyses sitosterol(in) + ATP + H2O = sitosterol(out) + ADP + phosphate + H(+). Functionally, ABCG5 and ABCG8 form an obligate heterodimer that mediates Mg(2+)- and ATP-dependent sterol transport across the cell membrane. Plays an essential role in the selective transport of the dietary cholesterol in and out of the enterocytes and in the selective sterol excretion by the liver into bile. Required for normal sterol homeostasis. The heterodimer with ABCG5 has ATPase activity. This Rattus norvegicus (Rat) protein is ATP-binding cassette sub-family G member 8.